The sequence spans 78 residues: Large ribosomal subunit protein bL28 (78 aa).

The segment at 1–22 (MSRVCQVTGKRPMSGNNRSHAM) is disordered.

Belongs to the bacterial ribosomal protein bL28 family.

The sequence is that of Large ribosomal subunit protein bL28 from Yersinia pseudotuberculosis serotype O:1b (strain IP 31758).